Reading from the N-terminus, the 408-residue chain is Arginine biosynthesis bifunctional protein ArgJ (408 aa).

Positions 162, 188, 199, 280, 403, and 408 each coordinate substrate. The Nucleophile role is filled by Thr199.

This sequence belongs to the ArgJ family. Heterotetramer of two alpha and two beta chains.

The protein localises to the cytoplasm. The catalysed reaction is N(2)-acetyl-L-ornithine + L-glutamate = N-acetyl-L-glutamate + L-ornithine. The enzyme catalyses L-glutamate + acetyl-CoA = N-acetyl-L-glutamate + CoA + H(+). It functions in the pathway amino-acid biosynthesis; L-arginine biosynthesis; L-ornithine and N-acetyl-L-glutamate from L-glutamate and N(2)-acetyl-L-ornithine (cyclic): step 1/1. It participates in amino-acid biosynthesis; L-arginine biosynthesis; N(2)-acetyl-L-ornithine from L-glutamate: step 1/4. Functionally, catalyzes two activities which are involved in the cyclic version of arginine biosynthesis: the synthesis of N-acetylglutamate from glutamate and acetyl-CoA as the acetyl donor, and of ornithine by transacetylation between N(2)-acetylornithine and glutamate. The sequence is that of Arginine biosynthesis bifunctional protein ArgJ from Ruegeria pomeroyi (strain ATCC 700808 / DSM 15171 / DSS-3) (Silicibacter pomeroyi).